A 486-amino-acid chain; its full sequence is Probable peptidoglycan glycosyltransferase FtsW (486 aa).

Over 1-50 (MAGAARDRAFLDHFGGAGADRPCHVEGALMNDMSRQATRLDAIGGRYDPW) the chain is Cytoplasmic. Residues 51–71 (LLGAAVTLASLGVVMVASSSI) form a helical membrane-spanning segment. Residues 72–77 (ELEASP) lie on the Periplasmic side of the membrane. Residues 78 to 98 (FYYLTRHLLFLGGGIALAFWA) traverse the membrane as a helical segment. At 99-112 (MRTELKTIEQHNQM) the chain is on the cytoplasmic side. Residues 113 to 133 (LLLACFVLLVVVFVPGLGSTV) form a helical membrane-spanning segment. At 134–141 (NGAKRWIN) the chain is on the periplasmic side. A helical transmembrane segment spans residues 142–162 (LGVSRFQVVESVKVFYIIWLA). Residues 163–174 (SYLVRFRDEVNA) lie on the Cytoplasmic side of the membrane. A helical transmembrane segment spans residues 175 to 195 (TWQAMLKPVFVVGLLVGLLLL). Residues 196–199 (QPDF) are Periplasmic-facing. Residues 200-220 (GSSMLLLSVTACMLVLGGAPI) form a helical membrane-spanning segment. The Cytoplasmic segment spans residues 221-222 (GR). The helical transmembrane segment at 223 to 243 (IILPILLLLPALVALVIFEPY) threads the bilayer. Residues 244 to 298 (RMRRVTSFMDPWVDQLGSGYQLSNALMAIGRGQWTGVGLGASVQKLNYLPESHTD) are Periplasmic-facing. A helical membrane pass occupies residues 299 to 319 (FIFSVIAEELGFVGVCGVIGL). The Cytoplasmic portion of the chain corresponds to 320 to 342 (YALLVGRAFWLGMRCVEMKRHFS). Residues 343 to 363 (GYIAFGIGLWIAMQSFVSIGV) traverse the membrane as a helical segment. The Periplasmic portion of the chain corresponds to 364-374 (NLGILPTKGLT). The chain crosses the membrane as a helical span at residues 375–395 (LPLISSGGSSVLMTCLAMGVL). Topologically, residues 396–486 (LRVSYEADRA…RVEPTFGRIA (91 aa)) are cytoplasmic.

Belongs to the SEDS family. FtsW subfamily.

The protein resides in the cell inner membrane. It carries out the reaction [GlcNAc-(1-&gt;4)-Mur2Ac(oyl-L-Ala-gamma-D-Glu-L-Lys-D-Ala-D-Ala)](n)-di-trans,octa-cis-undecaprenyl diphosphate + beta-D-GlcNAc-(1-&gt;4)-Mur2Ac(oyl-L-Ala-gamma-D-Glu-L-Lys-D-Ala-D-Ala)-di-trans,octa-cis-undecaprenyl diphosphate = [GlcNAc-(1-&gt;4)-Mur2Ac(oyl-L-Ala-gamma-D-Glu-L-Lys-D-Ala-D-Ala)](n+1)-di-trans,octa-cis-undecaprenyl diphosphate + di-trans,octa-cis-undecaprenyl diphosphate + H(+). It participates in cell wall biogenesis; peptidoglycan biosynthesis. Its function is as follows. Peptidoglycan polymerase that is essential for cell division. This chain is Probable peptidoglycan glycosyltransferase FtsW, found in Xanthomonas oryzae pv. oryzae (strain KACC10331 / KXO85).